Consider the following 298-residue polypeptide: ATP synthase F(1) complex subunit gamma, mitochondrial (298 aa).

A mitochondrion-targeting transit peptide spans 1–25; that stretch reads MFSRAGVAGLSAWTVQPQWIQVRNM. Position 39 is an N6-acetyllysine (lysine 39). An N6-succinyllysine modification is found at lysine 49. An N6-acetyllysine modification is found at lysine 55. Lysine 115 bears the N6-acetyllysine; alternate mark. Residue lysine 115 is modified to N6-succinyllysine; alternate. Serine 146 carries the post-translational modification Phosphoserine. Lysine 154 carries the post-translational modification N6-acetyllysine; alternate. The residue at position 154 (lysine 154) is an N6-succinyllysine; alternate. The residue at position 197 (lysine 197) is an N6-acetyllysine. At lysine 270 the chain carries N6-succinyllysine.

Belongs to the ATPase gamma chain family. Component of the ATP synthase complex composed at least of ATP5F1A/subunit alpha, ATP5F1B/subunit beta, ATP5MC1/subunit c (homooctomer), MT-ATP6/subunit a, MT-ATP8/subunit 8, ATP5ME/subunit e, ATP5MF/subunit f, ATP5MG/subunit g, ATP5MK/subunit k, ATP5MJ/subunit j, ATP5F1C/subunit gamma, ATP5F1D/subunit delta, ATP5F1E/subunit epsilon, ATP5PF/subunit F6, ATP5PB/subunit b, ATP5PD/subunit d, ATP5PO/subunit OSCP. ATP synthase complex consists of a soluble F(1) head domain (subunits alpha(3) and beta(3)) - the catalytic core - and a membrane F(0) domain - the membrane proton channel (subunits c, a, 8, e, f, g, k and j). These two domains are linked by a central stalk (subunits gamma, delta, and epsilon) rotating inside the F1 region and a stationary peripheral stalk (subunits F6, b, d, and OSCP). Interacts with FLVCR2; this interaction occurs in the absence of heme and is disrupted upon heme binding.

The protein resides in the mitochondrion inner membrane. Its function is as follows. Subunit gamma, of the mitochondrial membrane ATP synthase complex (F(1)F(0) ATP synthase or Complex V) that produces ATP from ADP in the presence of a proton gradient across the membrane which is generated by electron transport complexes of the respiratory chain. ATP synthase complex consist of a soluble F(1) head domain - the catalytic core - and a membrane F(1) domain - the membrane proton channel. These two domains are linked by a central stalk rotating inside the F(1) region and a stationary peripheral stalk. During catalysis, ATP synthesis in the catalytic domain of F(1) is coupled via a rotary mechanism of the central stalk subunits to proton translocation. In vivo, can only synthesize ATP although its ATP hydrolase activity can be activated artificially in vitro. With the central stalk subunit delta, is essential for the biogenesis of F(1) catalytic part of the ATP synthase complex namely in the formation of F1 assembly intermediate. The chain is ATP synthase F(1) complex subunit gamma, mitochondrial from Bos taurus (Bovine).